We begin with the raw amino-acid sequence, 154 residues long: Ribosome maturation factor RimP (154 aa).

This sequence belongs to the RimP family.

The protein localises to the cytoplasm. Functionally, required for maturation of 30S ribosomal subunits. This is Ribosome maturation factor RimP from Clostridium perfringens (strain ATCC 13124 / DSM 756 / JCM 1290 / NCIMB 6125 / NCTC 8237 / Type A).